A 319-amino-acid chain; its full sequence is tRNA uridine(34) hydroxylase (319 aa).

Residues 124-218 enclose the Rhodanese domain; that stretch reads LDEDTVILDA…YGKNEETKGE (95 aa). The Cysteine persulfide intermediate role is filled by C178.

This sequence belongs to the TrhO family.

It carries out the reaction uridine(34) in tRNA + AH2 + O2 = 5-hydroxyuridine(34) in tRNA + A + H2O. Its function is as follows. Catalyzes oxygen-dependent 5-hydroxyuridine (ho5U) modification at position 34 in tRNAs. The polypeptide is tRNA uridine(34) hydroxylase (Listeria monocytogenes serotype 4a (strain HCC23)).